Here is a 266-residue protein sequence, read N- to C-terminus: Phosphate import ATP-binding protein PstB (266 aa).

Positions 15 to 261 (VQKSVVNKLN…PKNKQTEDYI (247 aa)) constitute an ABC transporter domain. ATP is bound at residue 50–57 (GPSGCGKS).

The protein belongs to the ABC transporter superfamily. Phosphate importer (TC 3.A.1.7) family. In terms of assembly, the complex is composed of two ATP-binding proteins (PstB), two transmembrane proteins (PstC and PstA) and a solute-binding protein (PstS).

It is found in the cell inner membrane. It carries out the reaction phosphate(out) + ATP + H2O = ADP + 2 phosphate(in) + H(+). Functionally, part of the ABC transporter complex PstSACB involved in phosphate import. Responsible for energy coupling to the transport system. The protein is Phosphate import ATP-binding protein PstB of Nitrosomonas europaea (strain ATCC 19718 / CIP 103999 / KCTC 2705 / NBRC 14298).